A 101-amino-acid polypeptide reads, in one-letter code: MEPVDPNREPWNHPGSQPKTACTNCYCKKCCYHCQVCFLQKGLGISYGRKKRRQRRSAPPGSKNHQDLIPEQPLFQTQRKPTGPEESKKEVESKAEPDRFD.

Residues 1 to 24 (MEPVDPNREPWNHPGSQPKTACTN) form an interaction with human CREBBP region. The transactivation stretch occupies residues 1-48 (MEPVDPNREPWNHPGSQPKTACTNCYCKKCCYHCQVCFLQKGLGISYG). Residues Cys-22, Cys-25, and Cys-27 each contribute to the Zn(2+) site. Positions 22–37 (CTNCYCKKCCYHCQVC) are cysteine-rich. Lys-28 bears the N6-acetyllysine; by host PCAF mark. Residues Cys-30, His-33, Cys-34, and Cys-37 each contribute to the Zn(2+) site. The segment at 38 to 48 (FLQKGLGISYG) is core. The interval 48 to 101 (GRKKRRQRRSAPPGSKNHQDLIPEQPLFQTQRKPTGPEESKKEVESKAEPDRFD) is disordered. The Nuclear localization signal, RNA-binding (TAR), and protein transduction motif lies at 49–57 (RKKRRQRRS). The interaction with the host capping enzyme RNGTT stretch occupies residues 49-86 (RKKRRQRRSAPPGSKNHQDLIPEQPLFQTQRKPTGPEE). An N6-acetyllysine; by host EP300 and GCN5L2 mark is found at Lys-50 and Lys-51. Arg-52 and Arg-53 each carry asymmetric dimethylarginine; by host PRMT6. Positions 82-101 (TGPEESKKEVESKAEPDRFD) are enriched in basic and acidic residues.

This sequence belongs to the lentiviruses Tat family. Interacts with host CCNT1. Associates with the P-TEFb complex composed at least of Tat, P-TEFb (CDK9 and CCNT1), TAR RNA, RNA Pol II. Recruits the HATs CREBBP, TAF1/TFIID, EP300, PCAF and GCN5L2. Interacts with host KAT5/Tip60; this interaction targets the latter to degradation. Interacts with the host deacetylase SIRT1. Interacts with host capping enzyme RNGTT; this interaction stimulates RNGTT. Binds to host KDR, and to the host integrins ITGAV/ITGB3 and ITGA5/ITGB1. Interacts with host KPNB1/importin beta-1 without previous binding to KPNA1/importin alpha-1. Interacts with EIF2AK2. Interacts with host nucleosome assembly protein NAP1L1; this interaction may be required for the transport of Tat within the nucleus, since the two proteins interact at the nuclear rim. Interacts with host C1QBP/SF2P32; this interaction involves lysine-acetylated Tat. Interacts with the host chemokine receptors CCR2, CCR3 and CXCR4. Interacts with host DPP4/CD26; this interaction may trigger an anti-proliferative effect. Interacts with host LDLR. Interacts with the host extracellular matrix metalloproteinase MMP1. Interacts with host PRMT6; this interaction mediates Tat's methylation. Interacts with, and is ubiquitinated by MDM2/Hdm2. Interacts with host PSMC3 and HTATIP2. Interacts with STAB1; this interaction may overcome SATB1-mediated repression of IL2 and IL2RA (interleukin) in T cells by binding to the same domain than HDAC1. Interacts (when acetylated) with human CDK13, thereby increasing HIV-1 mRNA splicing and promoting the production of the doubly spliced HIV-1 protein Nef. Interacts with host TBP; this interaction modulates the activity of transcriptional pre-initiation complex. Interacts with host RELA. Interacts with host PLSCR1; this interaction negatively regulates Tat transactivation activity by altering its subcellular distribution. Asymmetrical arginine methylation by host PRMT6 seems to diminish the transactivation capacity of Tat and affects the interaction with host CCNT1. Post-translationally, acetylation by EP300, CREBBP, GCN5L2/GCN5 and PCAF regulates the transactivation activity of Tat. EP300-mediated acetylation of Lys-50 promotes dissociation of Tat from the TAR RNA through the competitive binding to PCAF's bromodomain. In addition, the non-acetylated Tat's N-terminus can also interact with PCAF. PCAF-mediated acetylation of Lys-28 enhances Tat's binding to CCNT1. Lys-50 is deacetylated by SIRT1. In terms of processing, polyubiquitination by host MDM2 does not target Tat to degradation, but activates its transactivation function and fosters interaction with CCNT1 and TAR RNA. Phosphorylated by EIF2AK2 on serine and threonine residues adjacent to the basic region important for TAR RNA binding and function. Phosphorylation of Tat by EIF2AK2 is dependent on the prior activation of EIF2AK2 by dsRNA.

Its subcellular location is the host nucleus. The protein localises to the host nucleolus. The protein resides in the host cytoplasm. It localises to the secreted. Its function is as follows. Transcriptional activator that increases RNA Pol II processivity, thereby increasing the level of full-length viral transcripts. Recognizes a hairpin structure at the 5'-LTR of the nascent viral mRNAs referred to as the transactivation responsive RNA element (TAR) and recruits the cyclin T1-CDK9 complex (P-TEFb complex) that will in turn hyperphosphorylate the RNA polymerase II to allow efficient elongation. The CDK9 component of P-TEFb and other Tat-activated kinases hyperphosphorylate the C-terminus of RNA Pol II that becomes stabilized and much more processive. Other factors such as HTATSF1/Tat-SF1, SUPT5H/SPT5, and HTATIP2 are also important for Tat's function. Besides its effect on RNA Pol II processivity, Tat induces chromatin remodeling of proviral genes by recruiting the histone acetyltransferases (HATs) CREBBP, EP300 and PCAF to the chromatin. This also contributes to the increase in proviral transcription rate, especially when the provirus integrates in transcriptionally silent region of the host genome. To ensure maximal activation of the LTR, Tat mediates nuclear translocation of NF-kappa-B by interacting with host RELA. Through its interaction with host TBP, Tat may also modulate transcription initiation. Tat can reactivate a latently infected cell by penetrating in it and transactivating its LTR promoter. In the cytoplasm, Tat is thought to act as a translational activator of HIV-1 mRNAs. In terms of biological role, extracellular circulating Tat can be endocytosed by surrounding uninfected cells via the binding to several surface receptors such as CD26, CXCR4, heparan sulfate proteoglycans (HSPG) or LDLR. Neurons are rarely infected, but they internalize Tat via their LDLR. Through its interaction with nuclear HATs, Tat is potentially able to control the acetylation-dependent cellular gene expression. Modulates the expression of many cellular genes involved in cell survival, proliferation or in coding for cytokines or cytokine receptors. Tat plays a role in T-cell and neurons apoptosis. Tat induced neurotoxicity and apoptosis probably contribute to neuroAIDS. Circulating Tat also acts as a chemokine-like and/or growth factor-like molecule that binds to specific receptors on the surface of the cells, affecting many cellular pathways. In the vascular system, Tat binds to ITGAV/ITGB3 and ITGA5/ITGB1 integrins dimers at the surface of endothelial cells and competes with bFGF for heparin-binding sites, leading to an excess of soluble bFGF. The polypeptide is Protein Tat (Human immunodeficiency virus type 1 group M subtype J (isolate SE9173) (HIV-1)).